A 160-amino-acid polypeptide reads, in one-letter code: Fimbrial protein (160 aa).

The propeptide at 1–7 (MKSLQKG) is leader sequence. Residue F8 is modified to N-methylphenylalanine. Residues 8–28 (FTLIELMIVVAIIGILAAFAI) traverse the membrane as a helical segment.

Belongs to the N-Me-Phe pilin family. The pili are polar flexible filaments of about 5.4 nanometers diameter and 2.5 micrometers average length; they consist of only a single polypeptide chain arranged in a helical configuration of five subunits per turn in the assembled pilus.

The protein resides in the fimbrium. The protein localises to the membrane. This Dichelobacter nodosus (Bacteroides nodosus) protein is Fimbrial protein (fimA).